The sequence spans 326 residues: Ribonuclease Z (326 aa).

Residues H62, H64, D66, H67, H140, D211, and H269 each contribute to the Zn(2+) site. D66 acts as the Proton acceptor in catalysis.

It belongs to the RNase Z family. As to quaternary structure, homodimer. Zn(2+) is required as a cofactor.

It carries out the reaction Endonucleolytic cleavage of RNA, removing extra 3' nucleotides from tRNA precursor, generating 3' termini of tRNAs. A 3'-hydroxy group is left at the tRNA terminus and a 5'-phosphoryl group is left at the trailer molecule.. Functionally, zinc phosphodiesterase, which displays some tRNA 3'-processing endonuclease activity. Probably involved in tRNA maturation, by removing a 3'-trailer from precursor tRNA. The polypeptide is Ribonuclease Z (Synechocystis sp. (strain ATCC 27184 / PCC 6803 / Kazusa)).